A 190-amino-acid chain; its full sequence is Xanthine phosphoribosyltransferase (190 aa).

Xanthine is bound by residues Leu-20 and Asn-27. 128-132 (ANGKA) contributes to the 5-phospho-alpha-D-ribose 1-diphosphate binding site. Lys-156 is a binding site for xanthine.

This sequence belongs to the purine/pyrimidine phosphoribosyltransferase family. Xpt subfamily. In terms of assembly, homodimer.

Its subcellular location is the cytoplasm. The catalysed reaction is XMP + diphosphate = xanthine + 5-phospho-alpha-D-ribose 1-diphosphate. It functions in the pathway purine metabolism; XMP biosynthesis via salvage pathway; XMP from xanthine: step 1/1. Its function is as follows. Converts the preformed base xanthine, a product of nucleic acid breakdown, to xanthosine 5'-monophosphate (XMP), so it can be reused for RNA or DNA synthesis. The chain is Xanthine phosphoribosyltransferase from Finegoldia magna (strain ATCC 29328 / DSM 20472 / WAL 2508) (Peptostreptococcus magnus).